A 223-amino-acid chain; its full sequence is Endonuclease NucS (223 aa).

Belongs to the NucS endonuclease family.

The protein resides in the cytoplasm. Cleaves both 3' and 5' ssDNA extremities of branched DNA structures. The sequence is that of Endonuclease NucS from Mycolicibacterium vanbaalenii (strain DSM 7251 / JCM 13017 / BCRC 16820 / KCTC 9966 / NRRL B-24157 / PYR-1) (Mycobacterium vanbaalenii).